Here is a 184-residue protein sequence, read N- to C-terminus: Large ribosomal subunit protein uL6 (184 aa).

The protein belongs to the universal ribosomal protein uL6 family. As to quaternary structure, part of the 50S ribosomal subunit.

Its function is as follows. This protein binds to the 23S rRNA, and is important in its secondary structure. It is located near the subunit interface in the base of the L7/L12 stalk, and near the tRNA binding site of the peptidyltransferase center. The protein is Large ribosomal subunit protein uL6 of Pyrococcus furiosus (strain ATCC 43587 / DSM 3638 / JCM 8422 / Vc1).